The primary structure comprises 107 residues: Class I hydrophobin 3 (107 aa).

A signal peptide spans 1–18 (MQFKVLAALVIGATLAAA). Intrachain disulfides connect C26–C86, C33–C80, C34–C67, and C87–C100. N-linked (GlcNAc...) asparagine glycans are attached at residues N35 and N89.

It belongs to the fungal hydrophobin family. As to quaternary structure, self-assembles to form functional amyloid fibrils called rodlets. Self-assembly into fibrillar rodlets occurs spontaneously at hydrophobic:hydrophilic interfaces and the rodlets further associate laterally to form amphipathic monolayers.

Its subcellular location is the secreted. It is found in the cell wall. Functionally, aerial growth, conidiation, and dispersal of filamentous fungi in the environment rely upon a capability of their secreting small amphipathic proteins called hydrophobins (HPBs) with low sequence identity. Class I can self-assemble into an outermost layer of rodlet bundles on aerial cell surfaces, conferring cellular hydrophobicity that supports fungal growth, development and dispersal; whereas Class II form highly ordered films at water-air interfaces through intermolecular interactions but contribute nothing to the rodlet structure. Pnh3 is a class I hydrophobin that might be involved in the attachment of the hydrophilic wall of hyphae to the hydrophobic surface of wood under inorganic phosphate (Pi)-deficient conditions and enable the mycelium to degrade efficiently the components of wood and to acquire nutrients containing Pi. In Pholiota nameko, this protein is Class I hydrophobin 3.